A 395-amino-acid polypeptide reads, in one-letter code: Multidrug resistance protein MdtL (395 aa).

Transmembrane regions (helical) follow at residues 4–24 (FLLC…MYLV), 42–62 (IAFS…GKIA), 69–89 (PVAI…SRAS), 93–113 (LFLS…VVAF), 131–151 (LLNG…HLIM), 158–178 (SLFY…LFIL), 217–237 (VSVI…VMGF), 247–267 (ALTA…LGLF), 271–291 (TLML…SLAH), 295–315 (VTLF…GVAM), 328–350 (VASS…LAAI), and 355–377 (AMNM…IFSV).

It belongs to the major facilitator superfamily. DHA1 family. MdtL (TC 2.A.1.2.22) subfamily.

Its subcellular location is the cell inner membrane. This Salmonella newport (strain SL254) protein is Multidrug resistance protein MdtL.